The following is a 454-amino-acid chain: Protein odr-4 homolog (454 aa).

2 consecutive transmembrane segments (helical) span residues 82 to 102 (MLPG…ELAN) and 432 to 452 (IGVI…FHYF).

Belongs to the ODR-4 family.

It is found in the membrane. In terms of biological role, may play a role in the trafficking of a subset of G-protein coupled receptors. This chain is Protein odr-4 homolog (ODR4), found in Pongo abelii (Sumatran orangutan).